The chain runs to 299 residues: Taste receptor type 2 member 19 (299 aa).

Residue M1 is a topological domain, extracellular. The chain crosses the membrane as a helical span at residues 2–22 (MCFLLIILSILVVFAFVLGNF). Topologically, residues 23–55 (SNGFIALVNVIDWVNTRKISSADQILTALVVSR) are cytoplasmic. Residues 56 to 76 (IGLLWVMLFLWYATVFNSALY) traverse the membrane as a helical segment. Topologically, residues 77 to 87 (GLEVRIVASNA) are extracellular. The chain crosses the membrane as a helical span at residues 88–108 (WAVMNHFSIWLAASLSIFCLL). Residues 109-127 (KIANFSNLIFLHLKKRIKS) lie on the Cytoplasmic side of the membrane. Residues 128-148 (VVLVILLGPLVFLICNLAVIT) traverse the membrane as a helical segment. The Extracellular portion of the chain corresponds to 149–181 (MDERVWTKEYEGNVTWKIKLRNAIQLSSLTVTT). N161 is a glycosylation site (N-linked (GlcNAc...) asparagine). Residues 182-202 (LANLIPFTLSLICFLLLICSL) form a helical membrane-spanning segment. The Cytoplasmic portion of the chain corresponds to 203–226 (CKHLKKMRLHSKGSQDPSTKVHIK). A helical transmembrane segment spans residues 227 to 247 (ALQTVTSFLMLFAIYFLCIIT). The Extracellular segment spans residues 248 to 259 (STWNLRTQQSKL). Residues 260–280 (VLLLCQTVAIMYPSFHSFILI) form a helical membrane-spanning segment. The Cytoplasmic segment spans residues 281-299 (MGSRKLKQTFLSVLWQMTR).

The protein belongs to the G-protein coupled receptor T2R family.

The protein localises to the membrane. Receptor that may play a role in the perception of bitterness and is gustducin-linked. May play a role in sensing the chemical composition of the gastrointestinal content. The activity of this receptor may stimulate alpha gustducin, mediate PLC-beta-2 activation and lead to the gating of TRPM5. The polypeptide is Taste receptor type 2 member 19 (TAS2R19) (Pan paniscus (Pygmy chimpanzee)).